Reading from the N-terminus, the 785-residue chain is ATP-dependent 6-phosphofructokinase 1 (785 aa).

The N-terminal catalytic PFK domain 1 stretch occupies residues 1-389; it reads MATTHAPAEP…YHFAYKNTAT (389 aa). ATP contacts are provided by residues Gly23, 86–87, and 116–119; these read RS and GDGS. Residue Asp117 coordinates Mg(2+). Residues 162-164, Arg199, 206-208, Glu263, Arg291, and 297-300 each bind substrate; these read SID, MGR, and HTQR. Asp164 functions as the Proton acceptor in the catalytic mechanism. Residues 390–403 form an interdomain linker region; sequence PDHPKLILPENKRM. Residues 404–785 form a C-terminal regulatory PFK domain 2 region; it reads RIAIIHVGAP…KTGWSCYENC (382 aa). Residues Arg480, 537–541, Arg575, 582–584, Glu642, Arg668, 674–677, and Arg749 contribute to the beta-D-fructose 2,6-bisphosphate site; these read TISNN, QGG, and HFQQ.

Belongs to the phosphofructokinase type A (PFKA) family. ATP-dependent PFK group I subfamily. Eukaryotic two domain clade 'E' sub-subfamily. In terms of assembly, homotetramer. It depends on Mg(2+) as a cofactor.

The protein localises to the cytoplasm. It carries out the reaction beta-D-fructose 6-phosphate + ATP = beta-D-fructose 1,6-bisphosphate + ADP + H(+). It functions in the pathway carbohydrate degradation; glycolysis; D-glyceraldehyde 3-phosphate and glycerone phosphate from D-glucose: step 3/4. Allosterically activated by ADP, AMP, or fructose 2,6-bisphosphate, and allosterically inhibited by ATP or citrate. Functionally, catalyzes the phosphorylation of D-fructose 6-phosphate to fructose 1,6-bisphosphate by ATP, the first committing step of glycolysis. This Aspergillus oryzae (strain ATCC 42149 / RIB 40) (Yellow koji mold) protein is ATP-dependent 6-phosphofructokinase 1 (pfkA).